Consider the following 120-residue polypeptide: MSRIKRGVTTRAKHKRILDQAKGYRGRRKNTIRVARQAVEKAGQYAYRDRKVKKRSFRALWIQRINAAVRAEGLTYSQFIHGAKLAGIELDRKAMADLAMNEGAIFNAVIAQAKAALPAA.

Belongs to the bacterial ribosomal protein bL20 family.

In terms of biological role, binds directly to 23S ribosomal RNA and is necessary for the in vitro assembly process of the 50S ribosomal subunit. It is not involved in the protein synthesizing functions of that subunit. This Novosphingobium aromaticivorans (strain ATCC 700278 / DSM 12444 / CCUG 56034 / CIP 105152 / NBRC 16084 / F199) protein is Large ribosomal subunit protein bL20.